A 362-amino-acid chain; its full sequence is MDKTSLKPGSTIGIIGGGQLGRMLAMAAARFGYETIILEPQAGCPAAQVANRQIVAAYDDPKALAELAAASDVITYEFENVPVSAADKLAETALVLPPPAALEISQDRFTEKQFLNESGIETAPWRLVDDEETLIAALGALGGRGILKIRRLGYDGKGQVRLASLDETQACNAFAAINKAPAILEGFVEFEREVSVIAARDRSGNVAIFDLAENVHKDGILATSTVPAAISVQTAEAARTAAEKLLHALDYVGVLGLEFFVLKDGTLLANEFAPRVHNSGHWTEAACAISQFEQHIRAVAGLPLGNTDRHSDCVMENLIGDDIEKVPAILCEKNAVLHLYGKKEARAGRKIGHVTRIKPRTI.

ATP is bound by residues Arg108, Lys148, 153 to 159 (GYDGKGQ), 185 to 188 (EGFV), Glu193, His216, and 270 to 271 (NE). The region spanning 112–300 (KQFLNESGIE…QFEQHIRAVA (189 aa)) is the ATP-grasp domain.

This sequence belongs to the PurK/PurT family. Homodimer.

The catalysed reaction is 5-amino-1-(5-phospho-beta-D-ribosyl)imidazole + hydrogencarbonate + ATP = 5-carboxyamino-1-(5-phospho-D-ribosyl)imidazole + ADP + phosphate + 2 H(+). It functions in the pathway purine metabolism; IMP biosynthesis via de novo pathway; 5-amino-1-(5-phospho-D-ribosyl)imidazole-4-carboxylate from 5-amino-1-(5-phospho-D-ribosyl)imidazole (N5-CAIR route): step 1/2. Its function is as follows. Catalyzes the ATP-dependent conversion of 5-aminoimidazole ribonucleotide (AIR) and HCO(3)(-) to N5-carboxyaminoimidazole ribonucleotide (N5-CAIR). In Brucella melitensis biotype 1 (strain ATCC 23456 / CCUG 17765 / NCTC 10094 / 16M), this protein is N5-carboxyaminoimidazole ribonucleotide synthase.